The sequence spans 360 residues: Polyamine aminopropyltransferase 2 (360 aa).

Positions 68-299 (DIWDEISLKE…TDWGFHIAAN (232 aa)) constitute a PABS domain. Residue Gln94 participates in S-methyl-5'-thioadenosine binding. Positions 123 and 147 each coordinate spermidine. S-methyl-5'-thioadenosine-binding positions include Asp167 and 201-202 (DA). Residue Asp219 is the Proton acceptor of the active site.

The protein belongs to the spermidine/spermine synthase family. As to quaternary structure, homodimer or homotetramer.

It localises to the cytoplasm. The enzyme catalyses S-adenosyl 3-(methylsulfanyl)propylamine + putrescine = S-methyl-5'-thioadenosine + spermidine + H(+). The protein operates within amine and polyamine biosynthesis; spermidine biosynthesis; spermidine from putrescine: step 1/1. In terms of biological role, catalyzes the irreversible transfer of a propylamine group from the amino donor S-adenosylmethioninamine (decarboxy-AdoMet) to putrescine (1,4-diaminobutane) to yield spermidine. The polypeptide is Polyamine aminopropyltransferase 2 (Bacillus anthracis).